Consider the following 399-residue polypeptide: L-methionine gamma-lyase (399 aa).

Pyridoxal 5'-phosphate contacts are provided by residues 59-61 and 89-90; these read YTR and GI. Substrate is bound at residue Y114. 209-211 lines the pyridoxal 5'-phosphate pocket; the sequence is SAT. K212 is modified (N6-(pyridoxal phosphate)lysine). R376 lines the substrate pocket.

The protein belongs to the trans-sulfuration enzymes family. L-methionine gamma-lyase subfamily. In terms of assembly, homotetramer; dimer of active dimers. It depends on pyridoxal 5'-phosphate as a cofactor.

The catalysed reaction is L-methionine + H2O = methanethiol + 2-oxobutanoate + NH4(+). It catalyses the reaction L-homocysteine + H2O = 2-oxobutanoate + hydrogen sulfide + NH4(+) + H(+). Functionally, catalyzes the alpha,gamma-elimination of L-methionine to produce methanethiol, 2-oxobutanoate and ammonia; methanethiol (methyl mercaptan) is considered to be one of the main causes of the oral malodor in periodontal disease and may also play a role in the pathogenicity of P.gingivalis in that disease. Is also able to catalyze the alpha,gamma-elimination of L-homocysteine. The protein is L-methionine gamma-lyase of Porphyromonas gingivalis (strain ATCC BAA-308 / W83).